The primary structure comprises 737 residues: Exostosin-1c (737 aa).

At 1–6 (MQARKK) the chain is on the cytoplasmic side. The chain crosses the membrane as a helical; Signal-anchor for type II membrane protein span at residues 7–27 (YVLLGLCTCCWILLYYWAGLQ). The Lumenal segment spans residues 28 to 737 (ERLLGLITHR…RKRYKDLERV (710 aa)). Asn-194 and Asn-322 each carry an N-linked (GlcNAc...) asparagine glycan. Residues Arg-432, Arg-540, Asp-556, Glu-557, Asp-558, Glu-644, Asp-645, and Arg-692 each contribute to the UDP-N-acetyl-alpha-D-glucosamine site. A Mn(2+)-binding site is contributed by Asp-558. The cysteines at positions 643 and 695 are disulfide-linked. Asp-645 is an active-site residue.

It belongs to the glycosyltransferase 47 family. It depends on Mn(2+) as a cofactor.

The protein resides in the endoplasmic reticulum membrane. It carries out the reaction 3-O-{[(1-&gt;4)-beta-D-GlcA-(1-&gt;4)-alpha-D-GlcNAc](n)-(1-&gt;4)-beta-D-GlcA-(1-&gt;3)-beta-D-Gal-(1-&gt;3)-beta-D-Gal-(1-&gt;4)-beta-D-Xyl}-L-seryl-[protein] + UDP-N-acetyl-alpha-D-glucosamine = 3-O-{alpha-D-GlcNAc-[(1-&gt;4)-beta-D-GlcA-(1-&gt;4)-alpha-D-GlcNAc](n)-(1-&gt;4)-beta-D-GlcA-(1-&gt;3)-beta-D-Gal-(1-&gt;3)-beta-D-Gal-(1-&gt;4)-beta-D-Xyl}-L-seryl-[protein] + UDP + H(+). It catalyses the reaction 3-O-{alpha-D-GlcNAc-[(1-&gt;4)-beta-D-GlcA-(1-&gt;4)-alpha-D-GlcNAc](n)-(1-&gt;4)-beta-D-GlcA-(1-&gt;3)-beta-D-Gal-(1-&gt;3)-beta-D-Gal-(1-&gt;4)-beta-D-Xyl}-L-seryl-[protein] + UDP-alpha-D-glucuronate = 3-O-{[(1-&gt;4)-beta-D-GlcA-(1-&gt;4)-alpha-D-GlcNAc](n+1)-(1-&gt;4)-beta-D-GlcA-(1-&gt;3)-beta-D-Gal-(1-&gt;3)-beta-D-Gal-(1-&gt;4)-beta-D-Xyl}-L-seryl-[protein] + UDP + H(+). Its pathway is protein modification; protein glycosylation. In terms of biological role, glycosyltransferase required for the biosynthesis of heparan-sulfate. This is Exostosin-1c (ext1c) from Danio rerio (Zebrafish).